Here is a 180-residue protein sequence, read N- to C-terminus: Large ribosomal subunit protein eL20 (180 aa).

This sequence belongs to the eukaryotic ribosomal protein eL20 family.

The chain is Large ribosomal subunit protein eL20 from Caenorhabditis elegans.